Reading from the N-terminus, the 204-residue chain is Protein LURP-one-related 14 (204 aa).

This sequence belongs to the LOR family.

Its function is as follows. Might be related to the phospholipid scramblase and tubby-like superfamily of membrane tethered transcription factors. The sequence is that of Protein LURP-one-related 14 from Arabidopsis thaliana (Mouse-ear cress).